The following is a 188-amino-acid chain: Phosphoribosylglycinamide formyltransferase (188 aa).

Residue glycine 12–asparagine 14 coordinates N(1)-(5-phospho-beta-D-ribosyl)glycinamide. Residues lysine 66, methionine 91–isoleucine 94, and asparagine 108 each bind (6R)-10-formyltetrahydrofolate. The Proton donor role is filled by histidine 110.

This sequence belongs to the GART family.

The enzyme catalyses N(1)-(5-phospho-beta-D-ribosyl)glycinamide + (6R)-10-formyltetrahydrofolate = N(2)-formyl-N(1)-(5-phospho-beta-D-ribosyl)glycinamide + (6S)-5,6,7,8-tetrahydrofolate + H(+). It participates in purine metabolism; IMP biosynthesis via de novo pathway; N(2)-formyl-N(1)-(5-phospho-D-ribosyl)glycinamide from N(1)-(5-phospho-D-ribosyl)glycinamide (10-formyl THF route): step 1/1. Functionally, catalyzes the transfer of a formyl group from 10-formyltetrahydrofolate to 5-phospho-ribosyl-glycinamide (GAR), producing 5-phospho-ribosyl-N-formylglycinamide (FGAR) and tetrahydrofolate. In Staphylococcus aureus (strain MRSA252), this protein is Phosphoribosylglycinamide formyltransferase.